Reading from the N-terminus, the 521-residue chain is Glucomannan 4-beta-mannosyltransferase 1 (521 aa).

A helical membrane pass occupies residues 22-42 (VIVPLLRLAVAVCLTMSVLLF). Asp123 is a catalytic residue. The substrate site is built by Asp182 and Asp184. The active site involves Asp276. 4 helical membrane passes run 355 to 375 (IIAH…TIFV), 391 to 411 (IITL…FFWI), 471 to 491 (VTEL…LAFG), and 495 to 515 (FFIY…GYVG).

This sequence belongs to the glycosyltransferase 2 family. Plant cellulose synthase-like A subfamily.

It is found in the golgi apparatus membrane. The enzyme catalyses GDP-mannose + (glucomannan)n = GDP + (glucomannan)n+1.. In terms of biological role, possesses glucomannan synthase and mannan synthase activities in vitro. Mannan synthase consists of a 4-beta-mannosyltransferase activity on mannan using GDP-mannose. The beta-1,4-mannan product is the backbone for galactomannan synthesis by galactomannan galactosyltransferase. Galactomannan is a noncellulosic polysaccharides of plant cell wall. This chain is Glucomannan 4-beta-mannosyltransferase 1, found in Oryza sativa subsp. japonica (Rice).